A 517-amino-acid polypeptide reads, in one-letter code: Urethanase (517 aa).

Residues Lys-98 and Ser-173 each act as charge relay system in the active site. The active-site Acyl-ester intermediate is Ser-197.

Belongs to the amidase family. As to quaternary structure, homooctamer.

It catalyses the reaction urethane + H2O + H(+) = ethanol + NH4(+) + CO2. With respect to regulation, exhibits poor salt tolerance but excellent tolerance to low concentrations of ethanol. EDTA has almost no impact on activity. Activity is increased in the presence of Ca(2+), Mg(2+) and Co(3+) and inhibited in the presence of Al(3+), Zn(2+) and Cu(2+). Functionally, hydrolase that can catalyze the degradation of ethyl carbamate (also called urethane), a probable human carcinogen widely found in alcoholic beverages. Can also use methyl carbamate, butyl carbamate, acetamide and urea. Also catalyzes the enantioselective hydrolysis of 2-phenylpropionamide, alpha-chlorophenylacetamide, 2-methyl-3-phenylpropionamide and alpha-methoxyphenylacetamide to the corresponding acids. Is inactive on benzamide and L-glutamine. This is Urethanase from Rhizobium radiobacter (Agrobacterium tumefaciens).